A 200-amino-acid polypeptide reads, in one-letter code: Urease accessory protein UreG (200 aa).

11–18 is a GTP binding site; it reads GPVGSGKT.

Belongs to the SIMIBI class G3E GTPase family. UreG subfamily. Homodimer. UreD, UreF and UreG form a complex that acts as a GTP-hydrolysis-dependent molecular chaperone, activating the urease apoprotein by helping to assemble the nickel containing metallocenter of UreC. The UreE protein probably delivers the nickel.

The protein localises to the cytoplasm. Functionally, facilitates the functional incorporation of the urease nickel metallocenter. This process requires GTP hydrolysis, probably effectuated by UreG. The protein is Urease accessory protein UreG of Thermosynechococcus vestitus (strain NIES-2133 / IAM M-273 / BP-1).